The following is an 86-amino-acid chain: MRLFLSLPVLVVVLLMILEGPGPAQGAPESVEASSGLDKLKEFGNNLEDKVREFFKRIKESDIPAKTRNWFSETLQKVKEKLRIES.

The signal sequence occupies residues 1–26 (MRLFLSLPVLVVVLLMILEGPGPAQG).

The protein belongs to the apolipoprotein C1 family.

The protein resides in the secreted. In terms of biological role, inhibitor of lipoprotein binding to the low density lipoprotein (LDL) receptor, LDL receptor-related protein, and very low density lipoprotein (VLDL) receptor. Associates with high density lipoproteins (HDL) and the triacylglycerol-rich lipoproteins in the plasma and makes up about 10% of the protein of the VLDL and 2% of that of HDL. Appears to interfere directly with fatty acid uptake and is also the major plasma inhibitor of cholesteryl ester transfer protein (CETP). Binds free fatty acids and reduces their intracellular esterification. Modulates the interaction of APOE with beta-migrating VLDL and inhibits binding of beta-VLDL to the LDL receptor-related protein. The sequence is that of Apolipoprotein C-I (APOC1) from Saimiri boliviensis boliviensis (Bolivian squirrel monkey).